Reading from the N-terminus, the 379-residue chain is MSEFLPFSRPAMGVEELAAVKEVLESGWITTGPKNQALEQAFCQLTGNQHAIAVSSATAGMHITLMALEIGKGDEVITPSLTWVSTLNMISLLGATPVMVDVDRDTLMVTPEAIESAITPRTKAIIPVHYAGAPADIDAIRAIGERYGIAVIEDAAHAVGTYYKGRHIGAKGTAIFSFHAIKNITCAEGGLIVTDNENLARQLRMLKFHGLGVDAYDRQTWGRAPQAEVLTPGYKYNLTDINAAIALTQLAKLEHLNTHRREIAQQYQQALAALPFQPLSLPAWPHVHAWHLFIIRVDEQRCGISRDALMEALKERGIGTGLHFRAAHTQKYYRERFPTLSLPNTEWNSERICSLPLFPDMTTADADRVITALQQLAGQ.

Residue K182 is modified to N6-(pyridoxal phosphate)lysine.

The protein belongs to the DegT/DnrJ/EryC1 family. ArnB subfamily. As to quaternary structure, homodimer. Requires pyridoxal 5'-phosphate as cofactor.

The catalysed reaction is UDP-4-amino-4-deoxy-beta-L-arabinose + 2-oxoglutarate = UDP-beta-L-threo-pentopyranos-4-ulose + L-glutamate. It functions in the pathway nucleotide-sugar biosynthesis; UDP-4-deoxy-4-formamido-beta-L-arabinose biosynthesis; UDP-4-deoxy-4-formamido-beta-L-arabinose from UDP-alpha-D-glucuronate: step 2/3. The protein operates within bacterial outer membrane biogenesis; lipopolysaccharide biosynthesis. Functionally, catalyzes the conversion of UDP-4-keto-arabinose (UDP-Ara4O) to UDP-4-amino-4-deoxy-L-arabinose (UDP-L-Ara4N). The modified arabinose is attached to lipid A and is required for resistance to polymyxin and cationic antimicrobial peptides. This chain is UDP-4-amino-4-deoxy-L-arabinose--oxoglutarate aminotransferase, found in Shigella sonnei (strain Ss046).